The following is a 432-amino-acid chain: Keratin, type I cytoskeletal 17 (432 aa).

Residues 1 to 24 form a disordered region; it reads MTTTIRQFTSSSSIKGSSGLGGGS. Residues 1–83 form a head region; sequence MTTTIRQFTS…GGVDGLLAGG (83 aa). A phosphoserine mark is found at Ser12 and Ser13. Residue Lys15 forms a Glycyl lysine isopeptide (Lys-Gly) (interchain with G-Cter in SUMO1); alternate linkage. Lys15 is covalently cross-linked (Glycyl lysine isopeptide (Lys-Gly) (interchain with G-Cter in SUMO2); alternate). Ser25, Ser32, and Ser39 each carry phosphoserine. Ser44 is modified (phosphoserine; by RPS6KA1). Residues 84 to 120 are coil 1A; that stretch reads EKATMQNLNDRLASYLDKVRALEEANTELEVKIRDWY. An IF rod domain is found at 84-395; the sequence is EKATMQNLND…RLLEGEDAHL (312 aa). At Thr110 the chain carries Phosphothreonine. A linker 1 region spans residues 121–138; that stretch reads QRQAPGPARDYSQYYRTI. The tract at residues 139–230 is coil 1B; the sequence is EELQNKILTA…NHEEEMNALR (92 aa). The interval 231 to 250 is linker 12; sequence GQVGGEINVEMDAAPGVDLS. Residues 251-392 are coil 2; it reads RILNEMRDQY…TYRRLLEGED (142 aa). Lys278 is covalently cross-linked (Glycyl lysine isopeptide (Lys-Gly) (interchain with G-Cter in SUMO2)). Phosphothreonine is present on Thr279. Ser323 is modified (phosphoserine). The tract at residues 393–432 is tail; sequence AHLTQYKKEPVTTRQVRTIVEEVQDGKVISSREQVHQTTR. Glycyl lysine isopeptide (Lys-Gly) (interchain with G-Cter in SUMO1); alternate cross-links involve residues Lys399, Lys400, and Lys419. Glycyl lysine isopeptide (Lys-Gly) (interchain with G-Cter in SUMO2); alternate cross-links involve residues Lys399, Lys400, and Lys419.

The protein belongs to the intermediate filament family. Heterodimer of a type I and a type II keratin. KRT17 associates with KRT6 isomers (KRT6A or KRT6B). Interacts with TRADD and SFN. Phosphorylation at Ser-44 occurs in a growth- and stress-dependent fashion in skin keratinocytes, it has no effect on filament organization.

The protein resides in the cytoplasm. Functionally, type I keratin involved in the formation and maintenance of various skin appendages, specifically in determining shape and orientation of hair. Required for the correct growth of hair follicles, in particular for the persistence of the anagen (growth) state. Modulates the function of TNF-alpha in the specific context of hair cycling. Regulates protein synthesis and epithelial cell growth through binding to the adapter protein SFN and by stimulating Akt/mTOR pathway. Involved in tissue repair. May be a marker of basal cell differentiation in complex epithelia and therefore indicative of a certain type of epithelial 'stem cells'. Acts as a promoter of epithelial proliferation by acting a regulator of immune response in skin: promotes Th1/Th17-dominated immune environment contributing to the development of basaloid skin tumors. May act as an autoantigen in the immunopathogenesis of psoriasis, with certain peptide regions being a major target for autoreactive T-cells and hence causing their proliferation. This is Keratin, type I cytoskeletal 17 from Pan troglodytes (Chimpanzee).